We begin with the raw amino-acid sequence, 565 residues long: MELEYESKRPLHIPYAGPILLEFPLLNKGSAFTEEERANFNLHGLLPEAVETIEEQAERAWRQYQEFKHDIEKHVYLRNIQDTNETLFYRLLDGHLSEMMPIIYTPTVGEACEHFSDIYRRARGLFISYPNRAHIDDMLQNATKQNVKVIVVTDGERILGLGDQGIGGMGIPIGKLSLYTACGGISPAYTLPVVLDVGTNNPQRLNDPLYMGWRHPRITDDEYYEFVDEFIQAVKRRWPNVLLQFEDFAQKNATPLLNRYRDEICSFNDDIQGTAAVALGSLIAASRAAGTQLRDQTVAFLGAGSAGCGIAEQIIAQMKSEGLSDEEARARVFMVDRFGLLTDKLPNLLDFQSKLVQKSELLANWDCNSDAISLLEVVRNAKPTILIGVSGQPGLFTEEIIREMHKHCARPIVMPLSNPTSRVEARPEDIIRWTEGAALVATGSPFSPVNYQDKVFPIAQCNNSYIFPGIGLGVLASGAKRITDGMLMAASRALADCSPLANNGEGALLPDLADIQQVSKRIALEVGKAAQLQGAAVVTSSDALQKAIEHNFWQPQYRSYKRTSF.

The Proton donor role is filled by Y104. R157 serves as a coordination point for NAD(+). K175 functions as the Proton acceptor in the catalytic mechanism. A divalent metal cation is bound by residues E246, D247, and D270. The NAD(+) site is built by D270 and N418.

This sequence belongs to the malic enzymes family. In terms of assembly, homotetramer. It depends on Mg(2+) as a cofactor. The cofactor is Mn(2+).

It catalyses the reaction (S)-malate + NAD(+) = pyruvate + CO2 + NADH. The catalysed reaction is oxaloacetate + H(+) = pyruvate + CO2. The protein is NAD-dependent malic enzyme of Pectobacterium carotovorum subsp. carotovorum (strain PC1).